A 103-amino-acid chain; its full sequence is MASKLFVLAFLCLALVVVVQSAPQYARGDVPTYDEEDFDEESLKPHSSSSSDDGEEEFDPSLLEEHADAPTARDPGRNPEFLRNSNTDEQASAPAASSSESDE.

Positions 1–21 are cleaved as a signal peptide; the sequence is MASKLFVLAFLCLALVVVVQS. Positions 24 to 103 are disordered; the sequence is QYARGDVPTY…PAASSSESDE (80 aa). A blocks exosite I of host thrombin region spans residues 56 to 68; sequence EEFDPSLLEEHAD. Positions 74–77 are blocks active site cleft of host thrombin in a reverse direction compared to substrates; sequence DPGR. A compositionally biased stretch (low complexity) spans 91–103; it reads ASAPAASSSESDE.

It belongs to the anophelin family. In terms of assembly, interacts with human F2 (thrombin); the interaction results in thrombin inhibition. Female salivary gland (at protein level). Not detected in female midgut, head, carcass and male tissues (at protein level).

The protein resides in the secreted. Increasing concentration of NaCl decreases affinity for thrombin. In terms of biological role, salivary protein with anticoagulant activity that inhibits host thrombin (F2); binds to the proteinase in a reverse orientation (opposite to substrates). In Anopheles gambiae (African malaria mosquito), this protein is Salivary thrombin inhibitor anophelin.